We begin with the raw amino-acid sequence, 24 residues long: Lectin (24 aa).

Polar residues predominate over residues 1–18 (AEEQSFSSTKFSTDQPNL). Residues 1–24 (AEEQSFSSTKFSTDQPNLILQGDA) are disordered.

Belongs to the leguminous lectin family. As to quaternary structure, homotetramer.

This Crotalaria juncea (Sunn hemp) protein is Lectin.